A 1199-amino-acid polypeptide reads, in one-letter code: Major DNA-binding protein (1199 aa).

The segment at 289 to 314 is disordered; it reads SGTTTARGARRNDVNSTSKPSPSGGF. Residues 497–510 fold into a zinc finger; the sequence is CSLCEKHTRPVCAH. 2 consecutive short sequence motifs (required for filament formation) follow at residues 841–842 and 1146–1148; these read FW and FNF. The required for nuclear localization stretch occupies residues 1172 to 1199; the sequence is LKRPPEDDELFDLSGIPIKHGNITMEMI.

This sequence belongs to the herpesviridae major DNA-binding protein family. Homooligomers. Forms double-helical filaments necessary for the formation of replication compartments within the host nucleus. Interacts with the origin-binding protein. Interacts with the helicase primase complex; this interaction stimulates primer synthesis activity of the helicase-primase complex. Interacts with the DNA polymerase. Interacts with the alkaline exonuclease; this interaction increases its nuclease processivity.

The protein resides in the host nucleus. Its function is as follows. Plays several crucial roles in viral infection. Participates in the opening of the viral DNA origin to initiate replication by interacting with the origin-binding protein. May disrupt loops, hairpins and other secondary structures present on ssDNA to reduce and eliminate pausing of viral DNA polymerase at specific sites during elongation. Promotes viral DNA recombination by performing strand-transfer, characterized by the ability to transfer a DNA strand from a linear duplex to a complementary single-stranded DNA circle. Can also catalyze the renaturation of complementary single strands. Additionally, reorganizes the host cell nucleus, leading to the formation of prereplicative sites and replication compartments. This process is driven by the protein which can form double-helical filaments in the absence of DNA. This Varicella-zoster virus (strain Oka vaccine) (HHV-3) protein is Major DNA-binding protein.